Reading from the N-terminus, the 478-residue chain is Cytochrome c-552 (478 aa).

An N-terminal signal peptide occupies residues Met1 to Ala26. A heme c-binding site is contributed by His94. The heme site is built by Cys122, Cys125, and Lys126. Heme c is bound by residues Cys160, Cys163, His164, Cys209, Cys212, and His213. Ca(2+) contacts are provided by Glu215, Tyr216, Lys261, and Gln263. Residue Tyr216 participates in substrate binding. A substrate-binding site is contributed by His264. 9 residues coordinate heme c: His275, Cys282, Cys285, His286, His301, Cys314, Cys317, His318, and His393.

The protein belongs to the cytochrome c-552 family. The cofactor is Ca(2+). Requires heme c as cofactor.

It is found in the periplasm. It carries out the reaction 6 Fe(III)-[cytochrome c] + NH4(+) + 2 H2O = 6 Fe(II)-[cytochrome c] + nitrite + 8 H(+). It functions in the pathway nitrogen metabolism; nitrate reduction (assimilation). Functionally, catalyzes the reduction of nitrite to ammonia, consuming six electrons in the process. The polypeptide is Cytochrome c-552 (Salmonella schwarzengrund (strain CVM19633)).